Reading from the N-terminus, the 299-residue chain is dTDP-4-dehydrorhamnose reductase (299 aa).

NADH-binding positions include 10 to 12, Asp-30, 39 to 40, and 63 to 65; these read GQV, DF, and AHT. 11 to 12 provides a ligand contact to NADPH; sequence QV. Residues 39 to 40, 63 to 65, and Tyr-102 each bind NADPH; these read DF and AHT. A dTDP-beta-L-rhamnose-binding site is contributed by 104-105; it reads TD. NADH-binding residues include Tyr-128 and Lys-132. The NADPH site is built by Tyr-128 and Lys-132. The active-site Proton donor/acceptor is the Tyr-128. Position 153 (Trp-153) interacts with dTDP-beta-L-rhamnose.

It belongs to the dTDP-4-dehydrorhamnose reductase family. As to quaternary structure, homodimer. The cofactor is Mg(2+).

It catalyses the reaction dTDP-beta-L-rhamnose + NADP(+) = dTDP-4-dehydro-beta-L-rhamnose + NADPH + H(+). The protein operates within carbohydrate biosynthesis; dTDP-L-rhamnose biosynthesis. It participates in bacterial outer membrane biogenesis; LPS O-antigen biosynthesis. Functionally, involved in the biosynthesis of the dTDP-L-rhamnose which is an important component of lipopolysaccharide (LPS). Catalyzes the reduction of dTDP-6-deoxy-L-lyxo-4-hexulose to yield dTDP-L-rhamnose. RmlD uses NADH and NADPH nearly equally well. This chain is dTDP-4-dehydrorhamnose reductase (rfbD), found in Salmonella typhimurium (strain LT2 / SGSC1412 / ATCC 700720).